The chain runs to 776 residues: 5-methyltetrahydropteroyltriglutamate--homocysteine methyltransferase (776 aa).

Residues 13-16 and Lys127 each bind 5-methyltetrahydropteroyltri-L-glutamate; that span reads RELK. L-homocysteine is bound by residues 450–452 and Glu503; that span reads IGS. L-methionine is bound by residues 450–452 and Glu503; that span reads IGS. Trp580 provides a ligand contact to 5-methyltetrahydropteroyltri-L-glutamate. Residue Asp618 participates in L-homocysteine binding. Residue Asp618 coordinates L-methionine. Position 624 (Glu624) interacts with 5-methyltetrahydropteroyltri-L-glutamate. Residues His660, Cys662, and Glu684 each coordinate Zn(2+). The active-site Proton donor is the His713. Zn(2+) is bound at residue Cys745.

This sequence belongs to the vitamin-B12 independent methionine synthase family. Requires Zn(2+) as cofactor.

It catalyses the reaction 5-methyltetrahydropteroyltri-L-glutamate + L-homocysteine = tetrahydropteroyltri-L-glutamate + L-methionine. The protein operates within amino-acid biosynthesis; L-methionine biosynthesis via de novo pathway; L-methionine from L-homocysteine (MetE route): step 1/1. Functionally, catalyzes the transfer of a methyl group from 5-methyltetrahydrofolate to homocysteine resulting in methionine formation. The sequence is that of 5-methyltetrahydropteroyltriglutamate--homocysteine methyltransferase from Mesorhizobium japonicum (strain LMG 29417 / CECT 9101 / MAFF 303099) (Mesorhizobium loti (strain MAFF 303099)).